The chain runs to 112 residues: Large ribosomal subunit protein P2A (112 aa).

Residues 83–112 (GAAPAAEAKKEEKVEEKEESDDDMGFSLFD) are disordered. The segment covering 89 to 98 (EAKKEEKVEE) has biased composition (basic and acidic residues).

The protein belongs to the eukaryotic ribosomal protein P1/P2 family. As to quaternary structure, P1 and P2 exist as dimers at the large ribosomal subunit. Phosphorylated.

Plays an important role in the elongation step of protein synthesis. In Zea mays (Maize), this protein is Large ribosomal subunit protein P2A (RPP2A).